Reading from the N-terminus, the 464-residue chain is Phospho-2-dehydro-3-deoxyheptonate aldolase AroG (464 aa).

C87 is a Mn(2+) binding site. Residues R126, 285–286 (ER), K308, and R339 each bind phosphoenolpyruvate. The Mn(2+) site is built by H371, E413, and D443.

It belongs to the class-II DAHP synthase family. In terms of assembly, homodimer. Probably interacts with MSMEG_5536. Mn(2+) is required as a cofactor. The cofactor is Co(2+). It depends on Cd(2+) as a cofactor.

The enzyme catalyses D-erythrose 4-phosphate + phosphoenolpyruvate + H2O = 7-phospho-2-dehydro-3-deoxy-D-arabino-heptonate + phosphate. It participates in metabolic intermediate biosynthesis; chorismate biosynthesis; chorismate from D-erythrose 4-phosphate and phosphoenolpyruvate: step 1/7. Its function is as follows. Catalyzes an aldol-like condensation reaction between phosphoenolpyruvate (PEP) and D-erythrose 4-phosphate (E4P) to generate 3-deoxy-D-arabino-heptulosonate 7-phosphate (DAH7P) and inorganic phosphate. This Mycolicibacterium smegmatis (strain ATCC 700084 / mc(2)155) (Mycobacterium smegmatis) protein is Phospho-2-dehydro-3-deoxyheptonate aldolase AroG (aroG).